Here is a 566-residue protein sequence, read N- to C-terminus: Membrane protein insertase YidC (566 aa).

Transmembrane regions (helical) follow at residues 3–23 (IKRI…FNAW), 346–366 (GWLW…HAVV), 369–389 (WGWS…WFSA), 436–456 (GGCL…YVII), and 509–529 (MWIL…GLVL).

Belongs to the OXA1/ALB3/YidC family. Type 1 subfamily. As to quaternary structure, interacts with the Sec translocase complex via SecD. Specifically interacts with transmembrane segments of nascent integral membrane proteins during membrane integration.

Its subcellular location is the cell inner membrane. Required for the insertion and/or proper folding and/or complex formation of integral membrane proteins into the membrane. Involved in integration of membrane proteins that insert both dependently and independently of the Sec translocase complex, as well as at least some lipoproteins. Aids folding of multispanning membrane proteins. The chain is Membrane protein insertase YidC from Coxiella burnetii (strain CbuK_Q154) (Coxiella burnetii (strain Q154)).